A 151-amino-acid polypeptide reads, in one-letter code: Small ribosomal subunit protein uS15 (151 aa).

Residues 1–16 (MPHRSRHKKGRSRSVR) are compositionally biased toward basic residues. The disordered stretch occupies residues 1 to 21 (MPHRSRHKKGRSRSVRPAHPT).

This sequence belongs to the universal ribosomal protein uS15 family. Part of the 30S ribosomal subunit.

This chain is Small ribosomal subunit protein uS15, found in Pyrobaculum islandicum (strain DSM 4184 / JCM 9189 / GEO3).